We begin with the raw amino-acid sequence, 172 residues long: Ribosomally synthesized cyclic peptide phomopsin precursor phomA (172 aa).

The first 18 residues, 1–18 (MRFTPAIVIAAFCSLAVA), serve as a signal peptide directing secretion. 11 consecutive propeptides follow at residues 19–35 (APAA…AVED), 42–50 (KKRGEAVED), 57–65 (KKRGEAVED), 72–79 (KRGEAVED), 86–93 (KRGEAVED), 100–108 (KKRGEAVED), 115–122 (KRGEAVED), 129–137 (RKRGEAVED), 144–151 (KRGEAVED), 158–165 (KRGEAVED), and K172.

In terms of processing, phomA is processed by several endopeptidases including kexin proteases as well as the cluster-specific S41 family peptidase phomP1 and the oligopeptidase phomG to produce 10 identical copies of the hexapeptide Tyr-Val-Ile-Pro-Ile-Asp, that is further modified to yield phomapsins. The timing and order of proteolysis of the phomA precursor and PTMs are still unknown. Two tyrosinase-like enzymes, phomQ1 and phomQ2, catalyze the chlorination and hydroxylation of Tyr, respectively. PhomYb, is proposed to be involved in the construction of the macrocyclic structure. The other 4 ustYa family proteins may be involved in PTMs that generate the unique structure of phomopsin A. PhomYa is required for the hydroxylation of C-beta of Tyr. PhomYc, phomYd, and phomYe are responsible for the biosynthesis of 2,3-dehydroisoleucine (dIle), 2,3-dehydroaspartic acid (dAsp), and 3,4-dehydroproline (dPro), respectively. While dIle formation by phomYc is indispensable for the installation of dAsp by phomYd, the order of the other PTMs have not been elucidated yet. Most of the biosynthetic enzymes likely have broad substrate specificity, and thus, there might be a metabolic grid from a precursor to phomopsin A. The enzyme(s) responsible for the biosynthesis of 3,4-dehydrovaline (dVal) have also not been identified yet. Finally, phomM acts as an S-adenosylmethionine-dependent alpha-N-methyltransferase that catalyzes two successive N-methylation reactions, converting N-desmethyl-phomopsin A to phomopsin A and phomopsin A further to an N,N-dimethylated congener called phomopsin E.

It participates in mycotoxin biosynthesis. Its function is as follows. Ribosomally synthesized cyclic peptide phomopsin precursor; part of the gene cluster that mediates the biosynthesis of the phomopsins, a group of hexapeptide mycotoxins which infects lupins and causes lupinosis disease in livestock. The phomA translated product contains a 10-fold repeated peptide embedding the hexapeptide Tyr-Val-Ile-Pro-Ile-Asp, that is converted into phomapsins. After being excised from the precursor peptide by kexin proteases, the core peptides are cyclized and modified post-translationally by enzymes encoded within the corresponding gene cluster. This chain is Ribosomally synthesized cyclic peptide phomopsin precursor phomA, found in Diaporthe leptostromiformis (Lupinosis disease fungus).